A 273-amino-acid chain; its full sequence is uncharacterized protein (273 aa).

Residues 1-21 (MKILRWLFALVMLIATTEAMA) form the signal peptide.

It to S.typhimurium YadU.

Functionally, part of the yfcOPQRSUV fimbrial operon. Could contribute to adhesion to various surfaces in specific environmental niches. Increases adhesion to eukaryotic T24 bladder epithelial cells in the absence of fim genes. This is an uncharacterized protein from Escherichia coli (strain K12).